Here is a 544-residue protein sequence, read N- to C-terminus: Chaperonin GroEL 2 (544 aa).

Residues 29–32 (TLGP), 86–90 (DGTTT), Gly-413, 479–481 (NAA), and Asp-495 each bind ATP.

The protein belongs to the chaperonin (HSP60) family. As to quaternary structure, forms a cylinder of 14 subunits composed of two heptameric rings stacked back-to-back. Interacts with the co-chaperonin GroES.

The protein resides in the cytoplasm. It carries out the reaction ATP + H2O + a folded polypeptide = ADP + phosphate + an unfolded polypeptide.. Together with its co-chaperonin GroES, plays an essential role in assisting protein folding. The GroEL-GroES system forms a nano-cage that allows encapsulation of the non-native substrate proteins and provides a physical environment optimized to promote and accelerate protein folding. This chain is Chaperonin GroEL 2, found in Prochlorococcus marinus (strain MIT 9313).